The chain runs to 101 residues: Apolipoprotein C-II (101 aa).

Positions 1–22 (MGIRYLLVLVLVLLVLGCEVQG) are cleaved as a signal peptide. Residues 66-74 (TVDEKIREI) are lipid binding. Positions 78-101 (STAAVSTYAGIFTDQLLSMLKGDQ) are lipoprotein lipase cofactor.

Belongs to the apolipoprotein C2 family. Proapolipoprotein C-II is synthesized as a sialic acid containing glycoprotein which is subsequently desialylated prior to its proteolytic processing. In terms of processing, proapolipoprotein C-II, the major form found in plasma undergoes proteolytic cleavage of its N-terminal hexapeptide to generate apolipoprotein C-II, which occurs as the minor form in plasma.

It is found in the secreted. Functionally, component of chylomicrons, very low-density lipoproteins (VLDL), low-density lipoproteins (LDL), and high-density lipoproteins (HDL) in plasma. Plays an important role in lipoprotein metabolism as an activator of lipoprotein lipase. Both proapolipoprotein C-II and apolipoprotein C-II can activate lipoprotein lipase. This is Apolipoprotein C-II (APOC2) from Mirounga angustirostris (Northern elephant seal).